A 108-amino-acid chain; its full sequence is Parvalbumin beta 1 (108 aa).

Alanine 1 carries the post-translational modification N-acetylalanine. EF-hand domains lie at 38-73 (KXXD…FCPK) and 77-108 (LTDA…LVKQ). 11 residues coordinate Ca(2+): aspartate 51, aspartate 53, serine 55, phenylalanine 57, glutamate 59, glutamate 62, aspartate 90, aspartate 92, aspartate 94, methionine 96, and glutamate 101.

The protein belongs to the parvalbumin family.

In muscle, parvalbumin is thought to be involved in relaxation after contraction. It binds two calcium ions. In Oncorhynchus mykiss (Rainbow trout), this protein is Parvalbumin beta 1.